Consider the following 239-residue polypeptide: MGRSFEVRKASMAKTQGAKIKVYSKYGKEIYVCAKNGGTDPDMNLSLRHLITKAKKDQVPAHVIEKALDKASGGAGEDYQPARYEGFGPGGASVIVDCLTDNGNRTYQDVRQCFVKTGAKIGTPGVVAHMFDHQAVFQFQGDDEEAILEALMMADAEVTDIEHEDGVITVFAPNTEFFKVKTALNEAFPDLTLDVEEITFVPQNRTVVSGEDAEKFQKFLDMLDDCDDVQQVYHNADIE.

The protein belongs to the TACO1 family.

The protein resides in the cytoplasm. This is Probable transcriptional regulatory protein VC_A0006 from Vibrio cholerae serotype O1 (strain ATCC 39315 / El Tor Inaba N16961).